Reading from the N-terminus, the 150-residue chain is Large ribosomal subunit protein uL15 (150 aa).

Positions 1 to 15 are enriched in polar residues; that stretch reads MNLSNLQPAEGSTHN. The tract at residues 1 to 52 is disordered; the sequence is MNLSNLQPAEGSTHNQNKRLGRGEGSGKGGTSARGHKGAKSRSGYSKKIGFE. Gly residues predominate over residues 23–32; sequence GEGSGKGGTS.

This sequence belongs to the universal ribosomal protein uL15 family. In terms of assembly, part of the 50S ribosomal subunit.

Functionally, binds to the 23S rRNA. In Flavobacterium psychrophilum (strain ATCC 49511 / DSM 21280 / CIP 103535 / JIP02/86), this protein is Large ribosomal subunit protein uL15.